Reading from the N-terminus, the 761-residue chain is Neurotrypsin (761 aa).

A signal peptide spans Met-1–Ala-21. Residues His-26–Gly-88 form a disordered region. Residues Thr-54–Ala-63 are compositionally biased toward pro residues. The region spanning Cys-85–Cys-157 is the Kringle domain. 17 cysteine pairs are disulfide-bonded: Cys-85-Cys-157, Cys-101-Cys-141, Cys-130-Cys-155, Cys-191-Cys-255, Cys-204-Cys-265, Cys-235-Cys-245, Cys-298-Cys-361, Cys-311-Cys-371, Cys-341-Cys-351, Cys-411-Cys-475, Cys-424-Cys-485, Cys-455-Cys-465, Cys-505-Cys-636, Cys-547-Cys-563, Cys-651-Cys-717, Cys-680-Cys-694, and Cys-707-Cys-736. A glycan (N-linked (GlcNAc...) asparagine) is linked at Asn-93. SRCR domains follow at residues Ile-166 to Pro-267, Ile-273 to Pro-373, and Ile-386 to Tyr-487. The tract at residues Cys-505 to Arg-516 is zymogen activation region. One can recognise a Peptidase S1 domain in the interval Ile-517–Ser-760. N-linked (GlcNAc...) asparagine glycosylation occurs at Asn-521. His-562 acts as the Charge relay system in catalysis. The N-linked (GlcNAc...) asparagine glycan is linked to Asn-569. Asp-612 functions as the Charge relay system in the catalytic mechanism. Ser-711 (charge relay system) is an active-site residue.

Belongs to the peptidase S1 family.

The protein resides in the secreted. In terms of biological role, plays a role in neuronal plasticity and the proteolytic action may subserve structural reorganizations associated with learning and memory operations. The polypeptide is Neurotrypsin (Prss12) (Rattus norvegicus (Rat)).